We begin with the raw amino-acid sequence, 307 residues long: Small ribosomal subunit protein uS3 (307 aa).

Residues 17–86 (MDEYFAEQLN…NPQIDAQEVK (70 aa)) enclose the KH type-2 domain. Positions 201 to 226 (IEEPAEKPAEKQVEKPAVAPKKEAAK) are enriched in basic and acidic residues. The interval 201 to 265 (IEEPAEKPAE…QVEASEDFEE (65 aa)) is disordered. A compositionally biased stretch (acidic residues) spans 240–265 (PTEEPEVAEPEEAEEAQVEASEDFEE).

The protein belongs to the universal ribosomal protein uS3 family. As to quaternary structure, part of the 30S ribosomal subunit.

In terms of biological role, binds the lower part of the 30S subunit head. The protein is Small ribosomal subunit protein uS3 of Methanosarcina mazei (strain ATCC BAA-159 / DSM 3647 / Goe1 / Go1 / JCM 11833 / OCM 88) (Methanosarcina frisia).